Reading from the N-terminus, the 209-residue chain is Large ribosomal subunit protein uL3 (209 aa).

The disordered stretch occupies residues 127–164 (NFSGGQRTHGQSDRLRAPGSVGGASDPSRTFKGTKMGG).

It belongs to the universal ribosomal protein uL3 family. As to quaternary structure, part of the 50S ribosomal subunit. Forms a cluster with proteins L14 and L19.

Functionally, one of the primary rRNA binding proteins, it binds directly near the 3'-end of the 23S rRNA, where it nucleates assembly of the 50S subunit. The sequence is that of Large ribosomal subunit protein uL3 from Chlorobium phaeobacteroides (strain BS1).